Reading from the N-terminus, the 326-residue chain is MAVYTDITEDELIRFLAAYEVGSLTSYKGIAEGVENSNFLLHTTRGAYILTLYEKRVNADDLPFFLGLMHHLAQRGLSCPLPLPRADGKLLGTLSGRPAAVISFLEGMWLRKPEAQHCREVGRALALMHQASEGFRLKRPNALSVEGWRPLWRNSEARADEVQAGLKDEIATELAFLEEHWPRALPEGVIHADLFPDNVFFLGDRLSGLIDFYFACNDFLAYDIAICLNSWCFEKDGSYNITKGMALLSGYESVRNLTAEEVEALPLLARGSALRFFLTRLYDWLTTPPGALVVKKDPLEYLTKIRFHRAIVSSAEYGLRREEASA.

The protein belongs to the pseudomonas-type ThrB family.

The enzyme catalyses L-homoserine + ATP = O-phospho-L-homoserine + ADP + H(+). It functions in the pathway amino-acid biosynthesis; L-threonine biosynthesis; L-threonine from L-aspartate: step 4/5. In Sinorhizobium medicae (strain WSM419) (Ensifer medicae), this protein is Homoserine kinase.